The chain runs to 448 residues: 3-phosphoshikimate 1-carboxyvinyltransferase (448 aa).

K38, S39, and R43 together coordinate 3-phosphoshikimate. Residue K38 participates in phosphoenolpyruvate binding. Phosphoenolpyruvate-binding residues include G111 and R140. Residues S185, Q187, D335, and K362 each coordinate 3-phosphoshikimate. Residue Q187 coordinates phosphoenolpyruvate. D335 functions as the Proton acceptor in the catalytic mechanism. Phosphoenolpyruvate contacts are provided by R366 and R408.

It belongs to the EPSP synthase family. Monomer.

It is found in the cytoplasm. The enzyme catalyses 3-phosphoshikimate + phosphoenolpyruvate = 5-O-(1-carboxyvinyl)-3-phosphoshikimate + phosphate. It participates in metabolic intermediate biosynthesis; chorismate biosynthesis; chorismate from D-erythrose 4-phosphate and phosphoenolpyruvate: step 6/7. Its function is as follows. Catalyzes the transfer of the enolpyruvyl moiety of phosphoenolpyruvate (PEP) to the 5-hydroxyl of shikimate-3-phosphate (S3P) to produce enolpyruvyl shikimate-3-phosphate and inorganic phosphate. This is 3-phosphoshikimate 1-carboxyvinyltransferase from Gloeothece citriformis (strain PCC 7424) (Cyanothece sp. (strain PCC 7424)).